We begin with the raw amino-acid sequence, 280 residues long: MSANYWTSSQRLHWLLTKETLAERRKGLEDIFDPGKLQTIKALNPWHVRVYLHTLIHLLGQNLSIRQRILATAEVYLTRFHTKVPFGEINPYLVVATAVYVACKVEEHPQHIRTITSEARSLWPDYISHDPTKIAECEFYLIEELGTYLVIFHPYKSLMQISDAMARSNAQITMAPEEIQVTWSMINDSYITDLHLLNPPHIVAMACIYMTVVLRSHIMRMTMPSEAVKSRIEAFMTFFGESNVDLEQTIDCVQEMISLYVNWDTYSEKQCRVEIAKVIT.

Positions 23-150 constitute a Cyclin N-terminal domain; sequence ERRKGLEDIF…LIEELGTYLV (128 aa).

Belongs to the cyclin family. Cyclin C subfamily. As to quaternary structure, component of the SRB8-11 complex, a regulatory module of the Mediator complex.

The protein resides in the nucleus. Its function is as follows. Component of the SRB8-11 complex. The SRB8-11 complex is a regulatory module of the Mediator complex which is itself involved in regulation of basal and activated RNA polymerase II-dependent transcription. The SRB8-11 complex may be involved in the transcriptional repression of a subset of genes regulated by Mediator. It may inhibit the association of the Mediator complex with RNA polymerase II to form the holoenzyme complex. The SRB8-11 complex phosphorylates the C-terminal domain (CTD) of the largest subunit of RNA polymerase II. The chain is RNA polymerase II holoenzyme cyclin-like subunit (SSN8) from Yarrowia lipolytica (strain CLIB 122 / E 150) (Yeast).